Reading from the N-terminus, the 917-residue chain is PAX3- and PAX7-binding protein 1 (917 aa).

Positions 1 to 11 (MFRKARRVNVR) are enriched in basic residues. 3 disordered regions span residues 1 to 123 (MFRK…FKVK), 143 to 205 (LEKS…GAFS), and 229 to 275 (RKKR…RIVF). Position 16 is a phosphoserine (S16). The segment covering 16–28 (SEEEERERDEEQE) has biased composition (acidic residues). Composition is skewed to gly residues over residues 40 to 50 (EEAGPGGGDRA) and 73 to 85 (AEAGGGFPGGAEP). Residue K149 forms a Glycyl lysine isopeptide (Lys-Gly) (interchain with G-Cter in SUMO1); alternate linkage. A Glycyl lysine isopeptide (Lys-Gly) (interchain with G-Cter in SUMO2); alternate cross-link involves residue K149. Phosphoserine occurs at positions 154, 155, and 158. Residues 161-172 (PLDKTGHVKDTN) show a composition bias toward basic and acidic residues. The span at 183-193 (GEDEMDMESEK) shows a compositional bias: acidic residues. A Phosphoserine modification is found at S191. The span at 234 to 256 (MARELGDFTPHDNEPGKGRLVRE) shows a compositional bias: basic and acidic residues. A compositionally biased stretch (acidic residues) spans 257–268 (DENDASDDEDDD). S262 and S295 each carry phosphoserine. 2 disordered regions span residues 362–381 (SSDAKSQKTDNTVPFKTPSN) and 530–564 (AEREARRTRRRQAREQTGKMADHLEGLSSDDEETS). Positions 378–558 (TPSNEMTPVT…MADHLEGLSS (181 aa)) are necessary and sufficient for interaction with PAX7. The span at 542–554 (AREQTGKMADHLE) shows a compositional bias: basic and acidic residues. A phosphoserine mark is found at S557 and S558. A Phosphothreonine modification is found at T563.

This sequence belongs to the GCF family. In terms of assembly, interacts with PAX3 and PAX7. Interacts with WDR5; associates with a histone methyltransferase (HMT) complex composed at least of RBBP5, ASH2L, SET1, SET2 and KMT2A/MLL1, KMT2D/MLL2, KMT2C/MLL3 and KMT2B/MLL4 through direct interaction with WDR5. In terms of tissue distribution, ubiquitous.

It is found in the nucleus. Its function is as follows. Adapter protein linking the transcription factors PAX3 and PAX7 to the histone methylation machinery and involved in myogenesis. Associates with a histone methyltransferase complex that specifically mediates dimethylation and trimethylation of 'Lys-4' of histone H3. Mediates the recruitment of that complex to the transcription factors PAX3 and PAX7 on chromatin to regulate the expression of genes involved in muscle progenitor cells proliferation including ID3 and CDC20. In Homo sapiens (Human), this protein is PAX3- and PAX7-binding protein 1 (PAXBP1).